The chain runs to 491 residues: MPWCKQGTTDKLVREFLRTGAAARNKMMKNWGVIGGIAAAMAAGVYVLWGPISDRRKKRKGMVPGLLNLGNTCFMNSLLQGLAACPSFIRWLEDFTSQNSADRERTERETQLSRSLMQLLKALSSHDPGEDDVLDAGGLLEALRLYRWHISSFEEQDAHELFHVLTSSLEEEQERQPRVAHLFDMQTLEKSVESKEKNISCRSGGPLHPIPSLWRTRHPFHGRLTSYMACKRCEQQSPVHYDSFDSLSLSIPSIQWGRPVTLDQCLQHFISSETIKEVECENCTKQQAGELVNGEVLESQRTTFVKQLKLGKRLTWSKEGSPIKRQEHVQFTEYLSLDRYKHCSAAQSQQKTSRTNKAKASADPKDKAIANGVDSEHCNNNKPQSNGTFPSVFLHSPGLSSQLNLTYDYSTSEYLFRLTAVLVHHGDMHSGHFITYRRCPAAPRGTSPFSSQWLWVSDDSVRKASLQEVLSSSAYLLFYERMQRPGLRVEE.

Over 1–31 (MPWCKQGTTDKLVREFLRTGAAARNKMMKNW) the chain is Mitochondrial intermembrane. A helical transmembrane segment spans residues 32–52 (GVIGGIAAAMAAGVYVLWGPI). Topologically, residues 53-491 (SDRRKKRKGM…MQRPGLRVEE (439 aa)) are cytoplasmic. In terms of domain architecture, USP spans 64-482 (PGLLNLGNTC…SAYLLFYERM (419 aa)). The active-site Nucleophile is the Cys73. Positions 346–355 (AQSQQKTSRT) are enriched in polar residues. The disordered stretch occupies residues 346–365 (AQSQQKTSRTNKAKASADPK). His432 serves as the catalytic Proton acceptor.

This sequence belongs to the peptidase C19 family.

It is found in the mitochondrion outer membrane. It catalyses the reaction Thiol-dependent hydrolysis of ester, thioester, amide, peptide and isopeptide bonds formed by the C-terminal Gly of ubiquitin (a 76-residue protein attached to proteins as an intracellular targeting signal).. Deubiquitinating enzyme that acts as a key inhibitor of mitophagy by counteracting the action of parkin (PRKN). The sequence is that of Ubiquitin carboxyl-terminal hydrolase 30 (usp30) from Danio rerio (Zebrafish).